A 338-amino-acid polypeptide reads, in one-letter code: RNA 3'-terminal phosphate cyclase (338 aa).

ATP-binding positions include Gln103 and 283 to 287 (YLADQ). His308 serves as the catalytic Tele-AMP-histidine intermediate.

The protein belongs to the RNA 3'-terminal cyclase family. Type 1 subfamily.

It is found in the cytoplasm. The catalysed reaction is a 3'-end 3'-phospho-ribonucleotide-RNA + ATP = a 3'-end 2',3'-cyclophospho-ribonucleotide-RNA + AMP + diphosphate. Functionally, catalyzes the conversion of 3'-phosphate to a 2',3'-cyclic phosphodiester at the end of RNA. The mechanism of action of the enzyme occurs in 3 steps: (A) adenylation of the enzyme by ATP; (B) transfer of adenylate to an RNA-N3'P to produce RNA-N3'PP5'A; (C) and attack of the adjacent 2'-hydroxyl on the 3'-phosphorus in the diester linkage to produce the cyclic end product. The biological role of this enzyme is unknown but it is likely to function in some aspects of cellular RNA processing. The sequence is that of RNA 3'-terminal phosphate cyclase from Escherichia coli O139:H28 (strain E24377A / ETEC).